The following is a 525-amino-acid chain: GMP synthase [glutamine-hydrolyzing] (525 aa).

Positions 7-207 constitute a Glutamine amidotransferase type-1 domain; it reads RILVIDFGSQ…ITCICRCKSS (201 aa). The active-site Nucleophile is Cys84. Active-site residues include His181 and Glu183. In terms of domain architecture, GMPS ATP-PPase spans 208-400; sequence WKIANIIDDI…LGIPYDIAYR (193 aa). 235–241 contributes to the ATP binding site; that stretch reads SGGIDSL.

In terms of assembly, homodimer.

The catalysed reaction is XMP + L-glutamine + ATP + H2O = GMP + L-glutamate + AMP + diphosphate + 2 H(+). The protein operates within purine metabolism; GMP biosynthesis; GMP from XMP (L-Gln route): step 1/1. Functionally, catalyzes the synthesis of GMP from XMP. This chain is GMP synthase [glutamine-hydrolyzing], found in Blochmanniella pennsylvanica (strain BPEN).